The chain runs to 91 residues: DNA-directed RNA polymerase subunit omega (91 aa).

Belongs to the RNA polymerase subunit omega family. As to quaternary structure, the RNAP catalytic core consists of 2 alpha, 1 beta, 1 beta' and 1 omega subunit. When a sigma factor is associated with the core the holoenzyme is formed, which can initiate transcription.

The catalysed reaction is RNA(n) + a ribonucleoside 5'-triphosphate = RNA(n+1) + diphosphate. Promotes RNA polymerase assembly. Latches the N- and C-terminal regions of the beta' subunit thereby facilitating its interaction with the beta and alpha subunits. This Pectobacterium carotovorum subsp. carotovorum (strain PC1) protein is DNA-directed RNA polymerase subunit omega.